Consider the following 93-residue polypeptide: MKVTNVKIKKVDGDKFDRLRAYVDVTLDDCLVIHGLKLMQGEQGMFVAMPSRKMRNEEFKDIVHPICPELRNDITKVVQEKYFALDQEQEAVI.

The protein belongs to the SpoVG family.

In terms of biological role, could be involved in septation. The sequence is that of Putative septation protein SpoVG from Fusobacterium nucleatum subsp. nucleatum (strain ATCC 25586 / DSM 15643 / BCRC 10681 / CIP 101130 / JCM 8532 / KCTC 2640 / LMG 13131 / VPI 4355).